Here is a 408-residue protein sequence, read N- to C-terminus: uncharacterized protein (408 aa).

Residues E35, D61, and N96 each contribute to the a divalent metal cation site.

This sequence belongs to the metallophosphoesterase superfamily. A divalent metal cation is required as a cofactor.

This is an uncharacterized protein from Bacillus subtilis (strain 168).